The following is a 230-amino-acid chain: Orotidine 5'-phosphate decarboxylase (230 aa).

Residues D10, K32, 59–68 (DLKLHDIPNT), T118, R179, Q188, G208, and R209 contribute to the substrate site. Catalysis depends on K61, which acts as the Proton donor.

The protein belongs to the OMP decarboxylase family. Type 1 subfamily. Homodimer.

It carries out the reaction orotidine 5'-phosphate + H(+) = UMP + CO2. Its pathway is pyrimidine metabolism; UMP biosynthesis via de novo pathway; UMP from orotate: step 2/2. Catalyzes the decarboxylation of orotidine 5'-monophosphate (OMP) to uridine 5'-monophosphate (UMP). This is Orotidine 5'-phosphate decarboxylase from Opitutus terrae (strain DSM 11246 / JCM 15787 / PB90-1).